The chain runs to 515 residues: Putative ribose/galactose/methyl galactoside import ATP-binding protein (515 aa).

ABC transporter domains lie at 25 to 261 (LEVL…VGRE) and 268 to 515 (LREK…SGLN). ATP is bound at residue 57 to 64 (GENGAGKS).

The protein belongs to the ABC transporter superfamily. Carbohydrate importer 2 (CUT2) (TC 3.A.1.2) family.

Its subcellular location is the cell inner membrane. It catalyses the reaction D-ribose(out) + ATP + H2O = D-ribose(in) + ADP + phosphate + H(+). The catalysed reaction is D-galactose(out) + ATP + H2O = D-galactose(in) + ADP + phosphate + H(+). In terms of biological role, part of an ABC transporter complex involved in carbohydrate import. Could be involved in ribose, galactose and/or methyl galactoside import. Responsible for energy coupling to the transport system. This is Putative ribose/galactose/methyl galactoside import ATP-binding protein from Pseudomonas fluorescens (strain ATCC BAA-477 / NRRL B-23932 / Pf-5).